A 103-amino-acid chain; its full sequence is Putative glutaredoxin-C12 (103 aa).

A Glutaredoxin domain is found at 1–102 (MERVRDLASE…QMLKASNAIW (102 aa)). C21 and C24 are disulfide-bonded.

This sequence belongs to the glutaredoxin family. CC-type subfamily.

It is found in the cytoplasm. Has a glutathione-disulfide oxidoreductase activity in the presence of NADPH and glutathione reductase. Reduces low molecular weight disulfides and proteins. The protein is Putative glutaredoxin-C12 (GRXC12) of Arabidopsis thaliana (Mouse-ear cress).